We begin with the raw amino-acid sequence, 67 residues long: Large ribosomal subunit protein bL35 (67 aa).

Positions 21 to 50 are disordered; that stretch reads KVMCGPGNKRHGLINRPQKMKRTNRGPQTM. Over residues 28 to 44 the composition is skewed to basic residues; the sequence is NKRHGLINRPQKMKRTN.

The protein belongs to the bacterial ribosomal protein bL35 family.

The chain is Large ribosomal subunit protein bL35 from Gluconobacter oxydans (strain 621H) (Gluconobacter suboxydans).